The primary structure comprises 207 residues: Large ribosomal subunit protein uL4 (207 aa).

The disordered stretch occupies residues 44-81; the sequence is KRQGTQSAKTRSEVRGGGRKPWRQKGTGRARQGSIRSP. The segment covering 60–71 has biased composition (basic residues); sequence GGRKPWRQKGTG.

This sequence belongs to the universal ribosomal protein uL4 family. In terms of assembly, part of the 50S ribosomal subunit.

One of the primary rRNA binding proteins, this protein initially binds near the 5'-end of the 23S rRNA. It is important during the early stages of 50S assembly. It makes multiple contacts with different domains of the 23S rRNA in the assembled 50S subunit and ribosome. In terms of biological role, forms part of the polypeptide exit tunnel. In Finegoldia magna (strain ATCC 29328 / DSM 20472 / WAL 2508) (Peptostreptococcus magnus), this protein is Large ribosomal subunit protein uL4.